The sequence spans 139 residues: Small ribosomal subunit protein uS12 (139 aa).

It belongs to the universal ribosomal protein uS12 family. As to quaternary structure, part of the 30S ribosomal subunit. Contacts proteins S8 and S17. May interact with IF1 in the 30S initiation complex.

Functionally, with S4 and S5 plays an important role in translational accuracy. In terms of biological role, interacts with and stabilizes bases of the 16S rRNA that are involved in tRNA selection in the A site and with the mRNA backbone. Located at the interface of the 30S and 50S subunits, it traverses the body of the 30S subunit contacting proteins on the other side and probably holding the rRNA structure together. The combined cluster of proteins S8, S12 and S17 appears to hold together the shoulder and platform of the 30S subunit. The sequence is that of Small ribosomal subunit protein uS12 from Mycoplasma pneumoniae (strain ATCC 29342 / M129 / Subtype 1) (Mycoplasmoides pneumoniae).